The sequence spans 286 residues: 4-hydroxy-tetrahydrodipicolinate synthase (286 aa).

Pyruvate is bound at residue T42. Residue Y129 is the Proton donor/acceptor of the active site. The active-site Schiff-base intermediate with substrate is K157. I196 is a pyruvate binding site.

This sequence belongs to the DapA family. In terms of assembly, homotetramer; dimer of dimers.

It localises to the cytoplasm. The enzyme catalyses L-aspartate 4-semialdehyde + pyruvate = (2S,4S)-4-hydroxy-2,3,4,5-tetrahydrodipicolinate + H2O + H(+). It functions in the pathway amino-acid biosynthesis; L-lysine biosynthesis via DAP pathway; (S)-tetrahydrodipicolinate from L-aspartate: step 3/4. Functionally, catalyzes the condensation of (S)-aspartate-beta-semialdehyde [(S)-ASA] and pyruvate to 4-hydroxy-tetrahydrodipicolinate (HTPA). The polypeptide is 4-hydroxy-tetrahydrodipicolinate synthase (Chlamydia trachomatis serovar A (strain ATCC VR-571B / DSM 19440 / HAR-13)).